A 297-amino-acid polypeptide reads, in one-letter code: N-acetylneuraminate lyase (297 aa).

Aceneuramate-binding residues include S47 and T48. Residue Y137 is the Proton donor of the active site. The Schiff-base intermediate with substrate role is filled by K165. Residues T167, G189, D191, E192, and S208 each contribute to the aceneuramate site.

The protein belongs to the DapA family. NanA subfamily. Homotetramer.

The protein resides in the cytoplasm. It carries out the reaction aceneuramate = aldehydo-N-acetyl-D-mannosamine + pyruvate. The protein operates within amino-sugar metabolism; N-acetylneuraminate degradation; D-fructose 6-phosphate from N-acetylneuraminate: step 1/5. Catalyzes the reversible aldol cleavage of N-acetylneuraminic acid (sialic acid; Neu5Ac) to form pyruvate and N-acetylmannosamine (ManNAc) via a Schiff base intermediate. The protein is N-acetylneuraminate lyase of Citrobacter koseri (strain ATCC BAA-895 / CDC 4225-83 / SGSC4696).